The primary structure comprises 432 residues: Adenylosuccinate synthetase (432 aa).

GTP-binding positions include 12 to 18 and 40 to 42; these read GDEGKGK and GHT. The Proton acceptor role is filled by D13. Mg(2+) contacts are provided by D13 and G40. IMP-binding positions include 13 to 16, 38 to 41, T131, R145, Q226, T241, and R305; these read DEGK and NAGH. The active-site Proton donor is H41. Position 301–307 (301–307) interacts with substrate; it reads ATTGRPR. Residues R307, 333-335, and 415-417 each bind GTP; these read KLD and STG.

The protein belongs to the adenylosuccinate synthetase family. In terms of assembly, homodimer. It depends on Mg(2+) as a cofactor.

Its subcellular location is the cytoplasm. The enzyme catalyses IMP + L-aspartate + GTP = N(6)-(1,2-dicarboxyethyl)-AMP + GDP + phosphate + 2 H(+). Its pathway is purine metabolism; AMP biosynthesis via de novo pathway; AMP from IMP: step 1/2. In terms of biological role, plays an important role in the de novo pathway of purine nucleotide biosynthesis. Catalyzes the first committed step in the biosynthesis of AMP from IMP. This Magnetococcus marinus (strain ATCC BAA-1437 / JCM 17883 / MC-1) protein is Adenylosuccinate synthetase.